The following is a 323-amino-acid chain: Lipoyl synthase (323 aa).

[4Fe-4S] cluster contacts are provided by C61, C66, C72, C87, C91, C94, and S300. The region spanning 73–289 (WDKKHATFMI…ETVAYSKGFL (217 aa)) is the Radical SAM core domain.

This sequence belongs to the radical SAM superfamily. Lipoyl synthase family. [4Fe-4S] cluster is required as a cofactor.

The protein localises to the cytoplasm. The catalysed reaction is [[Fe-S] cluster scaffold protein carrying a second [4Fe-4S](2+) cluster] + N(6)-octanoyl-L-lysyl-[protein] + 2 oxidized [2Fe-2S]-[ferredoxin] + 2 S-adenosyl-L-methionine + 4 H(+) = [[Fe-S] cluster scaffold protein] + N(6)-[(R)-dihydrolipoyl]-L-lysyl-[protein] + 4 Fe(3+) + 2 hydrogen sulfide + 2 5'-deoxyadenosine + 2 L-methionine + 2 reduced [2Fe-2S]-[ferredoxin]. Its pathway is protein modification; protein lipoylation via endogenous pathway; protein N(6)-(lipoyl)lysine from octanoyl-[acyl-carrier-protein]: step 2/2. Functionally, catalyzes the radical-mediated insertion of two sulfur atoms into the C-6 and C-8 positions of the octanoyl moiety bound to the lipoyl domains of lipoate-dependent enzymes, thereby converting the octanoylated domains into lipoylated derivatives. The sequence is that of Lipoyl synthase from Rhizobium etli (strain CIAT 652).